Consider the following 320-residue polypeptide: MSVGIIGAGQLAYALARGFTAAGIVSAHKIIASSPEMNLPTVSALRKMGVNLTRSNKETVKHSDVLFLAVKPHIIPFILDEIGADVQARHIVVSCAAGVTISSVEKKLMAFQPAPKVIRCMTNTPVVVREGATVYAMGTHALVEDGQLLEQLMSSVGFCTEVEEDLIDAVTGLSGSGPAYAFMALDALADGGVKMGLPRRLAVRLGAQALLGAAKMLLDSEQHPCQLKDNVCSPGGATIHALHFLESGGFRSLLINAVEASCIRTRELQSMADQEKISPAALKKTLLDRVKLESPTVSTLTPSSPGKLLTRSLALGGKKD.

Ser-2 carries the N-acetylserine modification. NADP(+) contacts are provided by residues 6–11 and Ser-34; that span reads IGAGQL. Residues Ala-8, Gln-10, Leu-11, Ser-34, Glu-36, Asn-56, Val-70, Lys-71, and Ala-97 each coordinate NADPH. NADP(+) contacts are provided by residues Asn-56, 69–72, and 95–97; these read AVKP and CAA. Glu-164 is a binding site for L-proline. Asn-230 contacts NADPH. 2 residues coordinate L-proline: Ala-237 and Thr-238. Residues 295-305 show a composition bias toward low complexity; sequence PTVSTLTPSSP. Positions 295–320 are disordered; sequence PTVSTLTPSSPGKLLTRSLALGGKKD. A Phosphoserine modification is found at Ser-304.

It belongs to the pyrroline-5-carboxylate reductase family. In terms of assembly, homodecamer; composed of 5 homodimers. Interacts with LTO1.

It is found in the cytoplasm. Its subcellular location is the mitochondrion. The catalysed reaction is L-proline + NADP(+) = (S)-1-pyrroline-5-carboxylate + NADPH + 2 H(+). It catalyses the reaction L-proline + NAD(+) = (S)-1-pyrroline-5-carboxylate + NADH + 2 H(+). The protein operates within amino-acid biosynthesis; L-proline biosynthesis; L-proline from L-glutamate 5-semialdehyde: step 1/1. Oxidoreductase that catalyzes the last step in proline biosynthesis, which corresponds to the reduction of pyrroline-5-carboxylate to L-proline using NAD(P)H. At physiologic concentrations, has higher specific activity in the presence of NADH. Involved in cellular response to oxidative stress. In some cell types, such as erythrocytes, its primary function may be the generation of NADP(+). This is Pyrroline-5-carboxylate reductase 2 (PYCR2) from Macaca fascicularis (Crab-eating macaque).